Consider the following 282-residue polypeptide: NADPH-dependent 7-cyano-7-deazaguanine reductase (282 aa).

I88 to S90 provides a ligand contact to substrate. S90–K91 serves as a coordination point for NADPH. The Thioimide intermediate role is filled by C190. The active-site Proton donor is the D197. H229–E230 is a binding site for substrate. R258 to G259 provides a ligand contact to NADPH.

Belongs to the GTP cyclohydrolase I family. QueF type 2 subfamily. Homodimer.

It localises to the cytoplasm. It catalyses the reaction 7-aminomethyl-7-carbaguanine + 2 NADP(+) = 7-cyano-7-deazaguanine + 2 NADPH + 3 H(+). It functions in the pathway tRNA modification; tRNA-queuosine biosynthesis. Functionally, catalyzes the NADPH-dependent reduction of 7-cyano-7-deazaguanine (preQ0) to 7-aminomethyl-7-deazaguanine (preQ1). This Escherichia coli O127:H6 (strain E2348/69 / EPEC) protein is NADPH-dependent 7-cyano-7-deazaguanine reductase.